We begin with the raw amino-acid sequence, 70 residues long: DNA-directed RNA polymerase subunit epsilon (70 aa).

Belongs to the RNA polymerase subunit epsilon family. As to quaternary structure, RNAP is composed of a core of 2 alpha, a beta and a beta' subunit. The core is associated with a delta subunit, and at least one of epsilon or omega. When a sigma factor is associated with the core the holoenzyme is formed, which can initiate transcription.

The enzyme catalyses RNA(n) + a ribonucleoside 5'-triphosphate = RNA(n+1) + diphosphate. Its function is as follows. A non-essential component of RNA polymerase (RNAP). The polypeptide is DNA-directed RNA polymerase subunit epsilon (Bacillus mycoides (strain KBAB4) (Bacillus weihenstephanensis)).